The sequence spans 328 residues: DNA-directed RNA polymerase subunit alpha (328 aa).

Positions Met-1–Gln-234 are alpha N-terminal domain (alpha-NTD). Residues Ile-248–Pro-328 are alpha C-terminal domain (alpha-CTD).

Belongs to the RNA polymerase alpha chain family. In terms of assembly, homodimer. The RNAP catalytic core consists of 2 alpha, 1 beta, 1 beta' and 1 omega subunit. When a sigma factor is associated with the core the holoenzyme is formed, which can initiate transcription.

The catalysed reaction is RNA(n) + a ribonucleoside 5'-triphosphate = RNA(n+1) + diphosphate. In terms of biological role, DNA-dependent RNA polymerase catalyzes the transcription of DNA into RNA using the four ribonucleoside triphosphates as substrates. This chain is DNA-directed RNA polymerase subunit alpha, found in Neisseria meningitidis serogroup A / serotype 4A (strain DSM 15465 / Z2491).